Here is a 366-residue protein sequence, read N- to C-terminus: NADH-quinone oxidoreductase subunit H (366 aa).

Helical transmembrane passes span 27 to 47 (LLLILAIVIPLLLAVAYLTFA), 99 to 119 (FLFLLAPVLAIGPALAAWAVV), 134 to 154 (LLYILAMTSLGVYGVIIAGWA), 168 to 188 (AAQVVSYELAMGFALVCVLMM), 206 to 226 (FLNWYLIPLFPMFLVYFISGV), 268 to 288 (ILVATLASIMFLGGWLPPVDI), 294 to 314 (IPGMVWLLLKIAFMLFFFLWF), and 329 to 349 (LGWKVFIPLTLVWIVVLGMVM).

It belongs to the complex I subunit 1 family. NDH-1 is composed of 14 different subunits. Subunits NuoA, H, J, K, L, M, N constitute the membrane sector of the complex.

It is found in the cell inner membrane. It carries out the reaction a quinone + NADH + 5 H(+)(in) = a quinol + NAD(+) + 4 H(+)(out). NDH-1 shuttles electrons from NADH, via FMN and iron-sulfur (Fe-S) centers, to quinones in the respiratory chain. The immediate electron acceptor for the enzyme in this species is believed to be ubiquinone. Couples the redox reaction to proton translocation (for every two electrons transferred, four hydrogen ions are translocated across the cytoplasmic membrane), and thus conserves the redox energy in a proton gradient. This subunit may bind ubiquinone. The polypeptide is NADH-quinone oxidoreductase subunit H (Nitrosomonas europaea (strain ATCC 19718 / CIP 103999 / KCTC 2705 / NBRC 14298)).